Reading from the N-terminus, the 377-residue chain is SH2/SH3 adapter protein Nck1 (377 aa).

Position 2 is an N-acetylalanine (Ala2). The SH3 1 domain occupies 2–61 (AEEVVVVAKFDYVAQQEQELDIKKNERLWLLDDSKSWWRVRNSMNKTGFVPSNYVERKNS). Ser85, Ser91, and Ser96 each carry phosphoserine. Phosphotyrosine is present on Tyr105. Positions 106–165 (DLNMPAFVKFNYMAEREDELSLIKGTKVIVMEKCSDGWWRGSYNGQIGWFPSNYVTEEGD) constitute an SH3 2 domain. Ser166 carries the phosphoserine modification. Positions 190–252 (QVLHVVQALY…PKNYVTIMQN (63 aa)) constitute an SH3 3 domain. Residues 282-376 (WYYGKVTRHQ…GEKLYLVKHL (95 aa)) form the SH2 domain.

As to quaternary structure, interacts (via SH2 domain and SH3 domain 2) with EGFR. Interacts with PAK1 and SOS1. Interacts (via SH3 domains) with PKN2. Associates with BLNK, PLCG1, VAV1 and NCK1 in a B-cell antigen receptor-dependent fashion. Interacts with SOCS7. This interaction is required for nuclear import. Part of a complex containing PPP1R15B, PP1 and NCK1. Interacts with RALGPS1. Interacts with CAV2 (tyrosine phosphorylated form). Interacts with ADAM15. Interacts with FASLG. Directly interacts with RASA1. Interacts with isoform 4 of MINK1. Interacts with FLT1 (tyrosine phosphorylated). Interacts with KDR (tyrosine phosphorylated). Interacts (via SH2 domain) with EPHB1; activates the JUN cascade to regulate cell adhesion. Interacts with EPHA2. Interacts (via SH2 domain) with PDGFRB (tyrosine phosphorylated). Interacts with the inactive form of EIF2AK2/PKR. Interacts with PTPN1. Interacts with INSR/insulin receptor (in response to insulin stimulation); this interaction may mediate PTPN1 recruitment leading to INSR dephosphorylation. Interacts with CD3E (via Proline-rich sequence); the interaction is ligand dependent but independent of tyrosine kinase activation. Interacts with EGFR. Interacts with IRS1. Post-translationally, phosphorylated on Ser and Tyr residues. Phosphorylated in response to activation of EGFR and FcERI. Phosphorylated by activated PDGFRB.

The protein resides in the cytoplasm. It localises to the endoplasmic reticulum. Its subcellular location is the nucleus. Adapter protein which associates with tyrosine-phosphorylated growth factor receptors, such as KDR and PDGFRB, or their cellular substrates. Maintains low levels of EIF2S1 phosphorylation by promoting its dephosphorylation by PP1. Plays a role in the DNA damage response, not in the detection of the damage by ATM/ATR, but for efficient activation of downstream effectors, such as that of CHEK2. Plays a role in ELK1-dependent transcriptional activation in response to activated Ras signaling. Modulates the activation of EIF2AK2/PKR by dsRNA. May play a role in cell adhesion and migration through interaction with ephrin receptors. Also acts as an adpater protein for the T cell receptor complex (TCR-CD3E). Upon ligand engagement, is recruited by CD3E and promotes maturation of the immune synapse and T cell activation. In Mus musculus (Mouse), this protein is SH2/SH3 adapter protein Nck1 (Nck1).